A 627-amino-acid chain; its full sequence is Carene synthase, chloroplastic (627 aa).

The N-terminal 36 residues, 1–36, are a transit peptide targeting the chloroplast; that stretch reads MSVISILPLASKSCLYKSLMSSTHELKALCRPIATL. 3 residues coordinate Mg(2+): Asp-378, Asp-382, and Asp-530. Positions 378-382 match the DDXXD motif motif; sequence DDMYD.

Belongs to the terpene synthase family. Tpsd subfamily. Requires Mg(2+) as cofactor. It depends on Mn(2+) as a cofactor.

The protein localises to the plastid. The protein resides in the chloroplast. It carries out the reaction (2E)-geranyl diphosphate = (+)-car-3-ene + diphosphate. Its pathway is terpene metabolism; oleoresin biosynthesis. Functionally, terpene synthase (TPS) involved in defensive oleoresin formation in conifers in response to insect attack or other injury. The sequence is that of Carene synthase, chloroplastic (JF67) from Picea abies (Norway spruce).